Consider the following 483-residue polypeptide: Uroporphyrinogen-III C-methyltransferase (483 aa).

It belongs to the precorrin methyltransferase family.

The enzyme catalyses uroporphyrinogen III + 2 S-adenosyl-L-methionine = precorrin-2 + 2 S-adenosyl-L-homocysteine + H(+). In Bacillus subtilis (strain 168), this protein is Uroporphyrinogen-III C-methyltransferase (nasF).